Consider the following 276-residue polypeptide: uncharacterized protein (276 aa).

15–22 (GKGGVGKS) lines the ATP pocket. 4Fe-4S ferredoxin-type domains lie at 68–96 (EIYEINDDCIRCGKCLDVCQFDAIGDFKI) and 92–121 (GDFKINPILCEGCGACELICEFDAIEPIKR). Residues C76, C79, C82, C86, C101, C104, C107, and C111 each contribute to the [4Fe-4S] cluster site.

This is an uncharacterized protein from Methanocaldococcus jannaschii (strain ATCC 43067 / DSM 2661 / JAL-1 / JCM 10045 / NBRC 100440) (Methanococcus jannaschii).